A 1326-amino-acid polypeptide reads, in one-letter code: Paired amphipathic helix protein Sin3-like 4 (1326 aa).

3 PAH domains span residues 8–78 (QKLT…LPKG), 95–165 (KPVE…LPDT), and 292–367 (IPSS…LAQC). 4 disordered regions span residues 272-299 (DDDSAEMSDQAREGDKFSGAIPSSSTYD), 715-812 (VPSR…RAET), 844-864 (SVAGLSNSNPKPALTSGTEEL), and 927-1000 (SKSK…EGDM). A compositionally biased stretch (basic and acidic residues) spans 721-737 (GAEDREDAVKSTNHDRE). Composition is skewed to polar residues over residues 744–757 (SPQNGASIANSMRS), 781–805 (SSKTSDALLSCDNTQNDKMPKNLTT), 844–861 (SVAGLSNSNPKPALTSGT), and 942–961 (PRSSDGSGNTSHNGDVSGTD). Over residues 967-981 (DCYREDDIDHNKVES) the composition is skewed to basic and acidic residues.

The protein resides in the nucleus. Acts as a transcriptional repressor. Plays roles in regulating gene expression and genome stability. The polypeptide is Paired amphipathic helix protein Sin3-like 4 (SNL4) (Arabidopsis thaliana (Mouse-ear cress)).